The following is an 818-amino-acid chain: Protein Cep78 homolog (818 aa).

Disordered regions lie at residues 513–589 (LDVE…HEFA), 691–748 (RQAN…TEAT), and 768–798 (KQSESMSLTEEAGDGDAGGGGGSGDFGDQNV). Over residues 514–539 (DVEEEEEEEEEEQQAEESQSESEPQN) the composition is skewed to acidic residues. The span at 561–589 (VRSEIKYVENNPKEAAKKNRESKSDHEFA) shows a compositional bias: basic and acidic residues. Positions 782–792 (GDAGGGGGSGD) are enriched in gly residues.

Belongs to the CEP78 family.

The protein resides in the cytoplasm. It is found in the cytoskeleton. Its subcellular location is the microtubule organizing center. It localises to the centrosome. The protein localises to the centriole. The protein resides in the cilium basal body. Its function is as follows. May play a role in cilium biogenesis. The polypeptide is Protein Cep78 homolog (Drosophila melanogaster (Fruit fly)).